A 363-amino-acid polypeptide reads, in one-letter code: Chorismate synthase (363 aa).

The NADP(+) site is built by R48 and R54. Residues 125 to 127 (RSS), 237 to 238 (NA), G277, 292 to 296 (KPTSS), and R318 each bind FMN.

The protein belongs to the chorismate synthase family. Homotetramer. FMNH2 is required as a cofactor.

It carries out the reaction 5-O-(1-carboxyvinyl)-3-phosphoshikimate = chorismate + phosphate. The protein operates within metabolic intermediate biosynthesis; chorismate biosynthesis; chorismate from D-erythrose 4-phosphate and phosphoenolpyruvate: step 7/7. Its function is as follows. Catalyzes the anti-1,4-elimination of the C-3 phosphate and the C-6 proR hydrogen from 5-enolpyruvylshikimate-3-phosphate (EPSP) to yield chorismate, which is the branch point compound that serves as the starting substrate for the three terminal pathways of aromatic amino acid biosynthesis. This reaction introduces a second double bond into the aromatic ring system. This Pseudomonas savastanoi pv. phaseolicola (strain 1448A / Race 6) (Pseudomonas syringae pv. phaseolicola (strain 1448A / Race 6)) protein is Chorismate synthase.